The sequence spans 364 residues: Inactive protein RESTRICTED TEV MOVEMENT 2 (364 aa).

The sHSP domain maps to 14–121; the sequence is VQYEDFVPKS…LPETSRTEAA (108 aa). Residues 129–133 form an A-1 repeat; it reads LEEKR. Positions 129–220 are 6 X 5 AA repeats A of L-E-E-[SKR]-[ERK]; sequence LEEKRLLEES…LEERRLEERK (92 aa). An A-2 repeat occupies 135–139; the sequence is LEESR. The A-3 repeat unit spans residues 156-160; that stretch reads LEEKE. A B-1 repeat occupies 163–176; that stretch reads IRKLQEEAKAKEEA. A 3 X 14 AA repeats B of [IMA]-[RK]-K-L-Q-E-E-A-K-A-K-E-[EK]-[LA] region spans residues 163–206; it reads IRKLQEEAKAKEEAEMRKLQEEAKAKEEAAAKKLQEEIEAKEKL. A B-2 repeat occupies 178 to 191; the sequence is MRKLQEEAKAKEEA. The B-3 repeat unit spans residues 193–205; the sequence is AKKLQEEIEAKEK. The stretch at 206 to 210 is one A-4 repeat; the sequence is LEERK. One copy of the A-5 repeat lies at 211 to 215; that stretch reads LEERR. The A-6 repeat unit spans residues 216–220; the sequence is LEERK. The chain crosses the membrane as a helical span at residues 322–342; the sequence is LMMNVGVAALVIFALGAYVSY. Positions 345-364 are disordered; it reads CSSSSSSSSPSSSSSSTKPE. Low complexity predominate over residues 346-364; sequence SSSSSSSSPSSSSSSTKPE.

The protein belongs to the small heat shock protein (HSP20) family.

It is found in the cell membrane. Functionally, seems to not be involved in heat resistance. Unable to mediate restriction of long-distance movement of the pathogenic tobacco etch virus (TEV) without causing a hypersensitive response or inducing systemic acquired resistance. This Arabidopsis thaliana (Mouse-ear cress) protein is Inactive protein RESTRICTED TEV MOVEMENT 2 (RTM2).